Consider the following 168-residue polypeptide: Signal peptidase I V (168 aa).

Residues 1 to 6 are Cytoplasmic-facing; sequence MKKRFW. Residues 7-26 traverse the membrane as a helical segment; the sequence is FLAGVVSVVLAIQVKNAVFI. The Extracellular segment spans residues 27–168; the sequence is DYKVEGVSMN…NIVGVISDAE (142 aa). Active-site residues include Ser34 and Lys75.

The protein belongs to the peptidase S26 family.

Its subcellular location is the cell membrane. It catalyses the reaction Cleavage of hydrophobic, N-terminal signal or leader sequences from secreted and periplasmic proteins.. The protein is Signal peptidase I V (sipV) of Bacillus subtilis (strain 168).